The sequence spans 144 residues: Large ribosomal subunit protein uL16 (144 aa).

The protein belongs to the universal ribosomal protein uL16 family. In terms of assembly, part of the 50S ribosomal subunit.

In terms of biological role, binds 23S rRNA and is also seen to make contacts with the A and possibly P site tRNAs. This is Large ribosomal subunit protein uL16 from Latilactobacillus sakei subsp. sakei (strain 23K) (Lactobacillus sakei subsp. sakei).